The primary structure comprises 297 residues: 1D-myo-inositol 2-acetamido-2-deoxy-alpha-D-glucopyranoside deacetylase (297 aa).

3 residues coordinate Zn(2+): His14, Asp17, and His149.

Belongs to the MshB deacetylase family. It depends on Zn(2+) as a cofactor.

The catalysed reaction is 1D-myo-inositol 2-acetamido-2-deoxy-alpha-D-glucopyranoside + H2O = 1D-myo-inositol 2-amino-2-deoxy-alpha-D-glucopyranoside + acetate. Functionally, catalyzes the deacetylation of 1D-myo-inositol 2-acetamido-2-deoxy-alpha-D-glucopyranoside (GlcNAc-Ins) in the mycothiol biosynthesis pathway. This chain is 1D-myo-inositol 2-acetamido-2-deoxy-alpha-D-glucopyranoside deacetylase, found in Thermomonospora curvata (strain ATCC 19995 / DSM 43183 / JCM 3096 / KCTC 9072 / NBRC 15933 / NCIMB 10081 / Henssen B9).